The sequence spans 495 residues: SH2 domain-containing adapter protein E (495 aa).

3 disordered regions span residues 51–190, 203–233, and 256–327; these read TVSE…DKGK, DYAD…EPYD, and LLDS…EYEQ. Residue Ser-107 is modified to Phosphoserine. Positions 135-144 are enriched in polar residues; sequence TKSSGCSTYI. Basic and acidic residues predominate over residues 148 to 157; the sequence is IKVDTQEKNG. A compositionally biased stretch (low complexity) spans 162–181; it reads PSSSSSSSSSSSSASSSPSS. Basic and acidic residues-rich tracts occupy residues 208–224 and 301–327; these read YDAK…RVGE and PRAE…EYEQ. The SH2 domain maps to 395-490; it reads WYHGAISRAE…AEHMTLLYPV (96 aa).

This Homo sapiens (Human) protein is SH2 domain-containing adapter protein E (SHE).